A 218-amino-acid chain; its full sequence is Adenylate kinase (218 aa).

Position 12 to 17 (12 to 17) interacts with ATP; sequence GAGKGT. The tract at residues 32-61 is NMP; the sequence is STGDMLREARSSGTEMGKRVAEVMDRGELV. AMP is bound by residues T33, R38, 59-61, 85-88, and Q92; these read ELV and GFPR. An LID region spans residues 126-164; the sequence is GRFTCGNCGEVYHDVTKPTKEPGKCDVCGSTDLRRRADD. Position 127 (R127) interacts with ATP. 2 residues coordinate Zn(2+): C130 and C133. 136–137 provides a ligand contact to ATP; sequence VY. 2 residues coordinate Zn(2+): C150 and C153. AMP-binding residues include R161 and R172. An ATP-binding site is contributed by A200.

The protein belongs to the adenylate kinase family. As to quaternary structure, monomer.

Its subcellular location is the cytoplasm. It catalyses the reaction AMP + ATP = 2 ADP. It participates in purine metabolism; AMP biosynthesis via salvage pathway; AMP from ADP: step 1/1. In terms of biological role, catalyzes the reversible transfer of the terminal phosphate group between ATP and AMP. Plays an important role in cellular energy homeostasis and in adenine nucleotide metabolism. The polypeptide is Adenylate kinase (Paracoccus denitrificans (strain Pd 1222)).